We begin with the raw amino-acid sequence, 325 residues long: Transcription initiation factor IIB (325 aa).

Residues asparagine 19 to glycine 52 form a TFIIB-type zinc finger. Cysteine 23, cysteine 26, cysteine 44, and cysteine 47 together coordinate Zn(2+). Repeat copies occupy residues methionine 131–glutamate 207 and phenylalanine 227–alanine 303.

Belongs to the TFIIB family.

Its subcellular location is the nucleus. Its function is as follows. General transcription factor that plays a role in transcription initiation by RNA polymerase II (Pol II). Involved in the pre-initiation complex (PIC) formation and Pol II recruitment at promoter DNA. This is Transcription initiation factor IIB (gtf2b) from Dictyostelium discoideum (Social amoeba).